We begin with the raw amino-acid sequence, 63 residues long: Prokaryotic ubiquitin-like protein Pup (63 aa).

A compositionally biased stretch (basic and acidic residues) spans M1–G11. Residues M1 to D36 are disordered. Residues S20 to Y57 are ARC ATPase binding. Residues V23 to E51 are a coiled coil. Position 63 is a deamidated glutamine (Q63). An Isoglutamyl lysine isopeptide (Gln-Lys) (interchain with K-? in acceptor proteins) cross-link involves residue Q63.

This sequence belongs to the prokaryotic ubiquitin-like protein family. As to quaternary structure, strongly interacts with the proteasome-associated ATPase ARC through a hydrophobic interface; the interacting region of Pup lies in its C-terminal half. There is one Pup binding site per ARC hexamer ring. Is modified by deamidation of its C-terminal glutamine to glutamate by the deamidase Dop, a prerequisite to the subsequent pupylation process.

The protein operates within protein degradation; proteasomal Pup-dependent pathway. Protein modifier that is covalently attached to lysine residues of substrate proteins, thereby targeting them for proteasomal degradation. The tagging system is termed pupylation. The protein is Prokaryotic ubiquitin-like protein Pup of Mycobacterium leprae (strain Br4923).